Consider the following 2457-residue polypeptide: Highly reducing polyketide synthase ACTTS3 (2457 aa).

One can recognise a Ketosynthase family 3 (KS3) domain in the interval 5–435 (REPIAVIGSA…GTNAHVILES (431 aa)). Active-site for beta-ketoacyl synthase activity residues include Cys-179, His-316, and His-356. Residues 545–856 (RVLGIFTGQG…VMEAVLESSP (312 aa)) form a malonyl-CoA:ACP transacylase (MAT) domain region. Catalysis depends on Ser-641, which acts as the For malonyltransferase activity. The segment at 938-1078 (HELLGRRTAD…GRIIIHLGSG (141 aa)) is N-terminal hotdog fold. Residues 938–1244 (HELLGRRTAD…LSLKSVAEPT (307 aa)) are dehydratase (DH) domain. The PKS/mFAS DH domain occupies 938-1246 (HELLGRRTAD…LKSVAEPTEE (309 aa)). Residue His-970 is the Proton acceptor; for dehydratase activity of the active site. The tract at residues 1091 to 1246 (TDLSPVDLDR…LKSVAEPTEE (156 aa)) is C-terminal hotdog fold. The Proton donor; for dehydratase activity role is filled by Asp-1152. The interval 1399–1587 (ETMNNCIARA…DVFYDFPDRS (189 aa)) is methyltransferase (CMet) domain. The tract at residues 2085–2281 (FLPDKTYLMI…SDRHIENHLR (197 aa)) is ketoreductase (KR) domain. The 78-residue stretch at 2374-2451 (DVTTVFQQAF…EISIDATKKY (78 aa)) folds into the Carrier domain. O-(pantetheine 4'-phosphoryl)serine is present on Ser-2411.

It depends on pantetheine 4'-phosphate as a cofactor.

The protein operates within mycotoxin biosynthesis. Its function is as follows. Highly reducing polyketide synthase; part of the gene clusters that mediate the biosynthesis of the host-selective toxins (HSTs) ACT-toxins responsible for brown spot of tangerine disease by the tangerine pathotype which affects tangerines and mandarins. ACT-toxins consist of three moieties, 9,10-epoxy-8-hydroxy-9-methyl-decatrienoic acid (EDA), valine and a polyketide. ACT-toxin I is toxic to both citrus and pear; toxin II the 5''-deoxy derivative of ACT-toxin I, is highly toxic to pear and slightly toxic to citrus. On cellular level, ACT-toxins affect plasma membrane of susceptible cells and cause a sudden increase in loss of K(+) after a few minutes of toxin treatment. The acyl-CoA ligase ACTT1, the hydrolase ACTT2, the enoyl-CoA hydratases ACTT3 and ACTT6, and the acyl-CoA synthetase ACTT5 are all involved in the biosynthesis of the AK-, AF- and ACT-toxin common 9,10-epoxy-8-hydroxy-9-methyl-decatrienoic acid (EDA) structural moiety. The exact role of each enzyme, and of additional enzymes identified within the AF-toxin clusters have still to be determined. On the other hand, ACTTS1 to ACTTS4 are specific to the tangerine pathotype. The function of ACTTS3 is to elongate the polyketide chain portion of ACT-toxin that is unique to this toxin. The enoyl-reductase ACTTS2 might complement the missing enoyl-reductase (ER) domain in ACTTS3 in the synthesis of the polyketide portion of ACT-toxin. The roles of the nonribosomal peptide synthetases-related proteins ACTTS1 and ACTTS4 have also still not been elucidated. The protein is Highly reducing polyketide synthase ACTTS3 of Alternaria alternata (Alternaria rot fungus).